Here is a 556-residue protein sequence, read N- to C-terminus: Membrane protein insertase YidC (556 aa).

5 helical membrane passes run 6–26 (IVLY…WQID), 332–352 (LDLT…FSLM), 358–378 (VVGN…LAFY), 428–448 (LGGC…YWVL), and 501–521 (VMMF…SGLV).

The protein belongs to the OXA1/ALB3/YidC family. Type 1 subfamily. In terms of assembly, interacts with the Sec translocase complex via SecD. Specifically interacts with transmembrane segments of nascent integral membrane proteins during membrane integration.

It is found in the cell inner membrane. Its function is as follows. Required for the insertion and/or proper folding and/or complex formation of integral membrane proteins into the membrane. Involved in integration of membrane proteins that insert both dependently and independently of the Sec translocase complex, as well as at least some lipoproteins. Aids folding of multispanning membrane proteins. The polypeptide is Membrane protein insertase YidC (Legionella pneumophila (strain Paris)).